Reading from the N-terminus, the 445-residue chain is GTPase Der (445 aa).

2 consecutive EngA-type G domains span residues 3–167 (PVIA…YAGQ) and 180–353 (VKIA…AAAM). Residues 9–16 (GRPNVGKS), 56–60 (DTGGF), 119–122 (NKAE), 186–193 (GRPNVGKS), 233–237 (DTAGL), and 298–301 (NKWD) contribute to the GTP site. Positions 354–438 (AKLPTPKLTR…PLRIEFRSST (85 aa)) constitute a KH-like domain.

It belongs to the TRAFAC class TrmE-Era-EngA-EngB-Septin-like GTPase superfamily. EngA (Der) GTPase family. As to quaternary structure, associates with the 50S ribosomal subunit.

Functionally, GTPase that plays an essential role in the late steps of ribosome biogenesis. This is GTPase Der from Paraburkholderia phytofirmans (strain DSM 17436 / LMG 22146 / PsJN) (Burkholderia phytofirmans).